Consider the following 153-residue polypeptide: 3-hydroxyacyl-[acyl-carrier-protein] dehydratase FabZ (153 aa).

His-57 is a catalytic residue.

Belongs to the thioester dehydratase family. FabZ subfamily.

Its subcellular location is the cytoplasm. The enzyme catalyses a (3R)-hydroxyacyl-[ACP] = a (2E)-enoyl-[ACP] + H2O. In terms of biological role, involved in unsaturated fatty acids biosynthesis. Catalyzes the dehydration of short chain beta-hydroxyacyl-ACPs and long chain saturated and unsaturated beta-hydroxyacyl-ACPs. In Xanthomonas oryzae pv. oryzae (strain MAFF 311018), this protein is 3-hydroxyacyl-[acyl-carrier-protein] dehydratase FabZ.